We begin with the raw amino-acid sequence, 243 residues long: Pyridoxine 5'-phosphate synthase (243 aa).

Asn9 contacts 3-amino-2-oxopropyl phosphate. Residue 11-12 (DH) participates in 1-deoxy-D-xylulose 5-phosphate binding. 3-amino-2-oxopropyl phosphate is bound at residue Arg20. Catalysis depends on His45, which acts as the Proton acceptor. Residues Arg47 and His52 each contribute to the 1-deoxy-D-xylulose 5-phosphate site. The active-site Proton acceptor is Glu72. Thr102 provides a ligand contact to 1-deoxy-D-xylulose 5-phosphate. His193 serves as the catalytic Proton donor. Residues Gly194 and 215-216 (GH) contribute to the 3-amino-2-oxopropyl phosphate site.

It belongs to the PNP synthase family. As to quaternary structure, homooctamer; tetramer of dimers.

The protein localises to the cytoplasm. It carries out the reaction 3-amino-2-oxopropyl phosphate + 1-deoxy-D-xylulose 5-phosphate = pyridoxine 5'-phosphate + phosphate + 2 H2O + H(+). It functions in the pathway cofactor biosynthesis; pyridoxine 5'-phosphate biosynthesis; pyridoxine 5'-phosphate from D-erythrose 4-phosphate: step 5/5. Functionally, catalyzes the complicated ring closure reaction between the two acyclic compounds 1-deoxy-D-xylulose-5-phosphate (DXP) and 3-amino-2-oxopropyl phosphate (1-amino-acetone-3-phosphate or AAP) to form pyridoxine 5'-phosphate (PNP) and inorganic phosphate. The sequence is that of Pyridoxine 5'-phosphate synthase from Yersinia pestis.